Here is a 524-residue protein sequence, read N- to C-terminus: Chromosomal replication initiator protein DnaA (524 aa).

The interval Met1 to Gln105 is domain I, interacts with DnaA modulators. Positions Pro95–Ser183 are disordered. The tract at residues Gln106–Val182 is domain II. The span at Ala148–Asp158 shows a compositional bias: pro residues. The domain III, AAA+ region stretch occupies residues Ser183–Ser399. ATP is bound by residues Gly227, Gly229, Lys230, and Thr231. The interval Ser400 to Asn524 is domain IV, binds dsDNA.

Belongs to the DnaA family. In terms of assembly, oligomerizes as a right-handed, spiral filament on DNA at oriC.

It is found in the cytoplasm. Functionally, plays an essential role in the initiation and regulation of chromosomal replication. ATP-DnaA binds to the origin of replication (oriC) to initiate formation of the DNA replication initiation complex once per cell cycle. Binds the DnaA box (a 9 base pair repeat at the origin) and separates the double-stranded (ds)DNA. Forms a right-handed helical filament on oriC DNA; dsDNA binds to the exterior of the filament while single-stranded (ss)DNA is stabiized in the filament's interior. The ATP-DnaA-oriC complex binds and stabilizes one strand of the AT-rich DNA unwinding element (DUE), permitting loading of DNA polymerase. After initiation quickly degrades to an ADP-DnaA complex that is not apt for DNA replication. Binds acidic phospholipids. The chain is Chromosomal replication initiator protein DnaA from Corynebacterium glutamicum (strain R).